We begin with the raw amino-acid sequence, 266 residues long: Glutamate racemase (266 aa).

Substrate-binding positions include 9-10 (DS) and 41-42 (YG). Cys72 (proton donor/acceptor) is an active-site residue. A substrate-binding site is contributed by 73–74 (NT). Cys184 functions as the Proton donor/acceptor in the catalytic mechanism. Residue 185–186 (TH) participates in substrate binding.

The protein belongs to the aspartate/glutamate racemases family.

The enzyme catalyses L-glutamate = D-glutamate. The protein operates within cell wall biogenesis; peptidoglycan biosynthesis. Functionally, provides the (R)-glutamate required for cell wall biosynthesis. This is Glutamate racemase from Staphylococcus haemolyticus.